The primary structure comprises 345 residues: S-adenosylmethionine:tRNA ribosyltransferase-isomerase (345 aa).

This sequence belongs to the QueA family. In terms of assembly, monomer.

Its subcellular location is the cytoplasm. It catalyses the reaction 7-aminomethyl-7-carbaguanosine(34) in tRNA + S-adenosyl-L-methionine = epoxyqueuosine(34) in tRNA + adenine + L-methionine + 2 H(+). It functions in the pathway tRNA modification; tRNA-queuosine biosynthesis. Its function is as follows. Transfers and isomerizes the ribose moiety from AdoMet to the 7-aminomethyl group of 7-deazaguanine (preQ1-tRNA) to give epoxyqueuosine (oQ-tRNA). The sequence is that of S-adenosylmethionine:tRNA ribosyltransferase-isomerase from Shewanella halifaxensis (strain HAW-EB4).